An 80-amino-acid chain; its full sequence is Putative membrane protein insertion efficiency factor (80 aa).

Belongs to the UPF0161 family.

The protein resides in the cell inner membrane. Functionally, could be involved in insertion of integral membrane proteins into the membrane. The polypeptide is Putative membrane protein insertion efficiency factor (Syntrophobacter fumaroxidans (strain DSM 10017 / MPOB)).